The primary structure comprises 258 residues: MNKLFSLILALFLVNSAVVSSLDSCSICVDFVGNSLNDLLNIILNSGVIGTCGDLCSAVPGGQIVDTVCDLLCDYVGVDEFIKLISDVDPDPIYICEKISVCKTNDNAAASLDLVQINPQNGTVGGTFTLSIAYTVTNTIATGQLAFNIIDPTGNAFGDAVLLVQQSPEQYTQQFQFQATPSEQESFPNGLYTVQALVCEGSCGSPHPNTYTLANGTTTFTISGADSSSMSGAGSFSGSSQSTQTGAASGSGSGFALF.

Positions 1–21 (MNKLFSLILALFLVNSAVVSS) are cleaved as a signal peptide. A Saposin B-type domain is found at 22-106 (LDSCSICVDF…EKISVCKTND (85 aa)). Disulfide bonds link Cys-25–Cys-102, Cys-28–Cys-96, and Cys-56–Cys-69. Residues Asn-121 and Asn-215 are each glycosylated (N-linked (GlcNAc...) asparagine). Over residues 233–248 (AGSFSGSSQSTQTGAA) the composition is skewed to low complexity. Residues 233 to 258 (AGSFSGSSQSTQTGAASGSGSGFALF) are disordered. Residues 249–258 (SGSGSGFALF) are compositionally biased toward gly residues.

The protein belongs to the countin family. Component of the counting factor (CF) complex, which includes cf60, cf50, cf45-1 and ctnA.

The protein localises to the secreted. Cell-counting factor that limits the maximum size of the multicellular structure. May down-regulate the expression of gp24, which mediates cell adhesion. This is Countin-1 (ctnA) from Dictyostelium discoideum (Social amoeba).